A 245-amino-acid polypeptide reads, in one-letter code: 1-(5-phosphoribosyl)-5-[(5-phosphoribosylamino)methylideneamino] imidazole-4-carboxamide isomerase (245 aa).

Asp-10 serves as the catalytic Proton acceptor. Asp-135 functions as the Proton donor in the catalytic mechanism.

Belongs to the HisA/HisF family.

It is found in the cytoplasm. The enzyme catalyses 1-(5-phospho-beta-D-ribosyl)-5-[(5-phospho-beta-D-ribosylamino)methylideneamino]imidazole-4-carboxamide = 5-[(5-phospho-1-deoxy-D-ribulos-1-ylimino)methylamino]-1-(5-phospho-beta-D-ribosyl)imidazole-4-carboxamide. It functions in the pathway amino-acid biosynthesis; L-histidine biosynthesis; L-histidine from 5-phospho-alpha-D-ribose 1-diphosphate: step 4/9. This is 1-(5-phosphoribosyl)-5-[(5-phosphoribosylamino)methylideneamino] imidazole-4-carboxamide isomerase from Methanosarcina acetivorans (strain ATCC 35395 / DSM 2834 / JCM 12185 / C2A).